A 445-amino-acid polypeptide reads, in one-letter code: Argininosuccinate synthase (445 aa).

ATP-binding positions include 17-25 (AFSGGLDTS) and Ala43. Tyr99 is a binding site for L-citrulline. 2 residues coordinate ATP: Gly129 and Thr131. Residues Thr131, Asn135, and Asp136 each contribute to the L-aspartate site. L-citrulline is bound at residue Asn135. Position 136 (Asp136) interacts with ATP. 2 residues coordinate L-citrulline: Arg139 and Ser192. Residue Asp194 coordinates ATP. L-citrulline-binding residues include Thr201, Glu203, and Glu280.

It belongs to the argininosuccinate synthase family. Type 2 subfamily. In terms of assembly, homotetramer.

It localises to the cytoplasm. It catalyses the reaction L-citrulline + L-aspartate + ATP = 2-(N(omega)-L-arginino)succinate + AMP + diphosphate + H(+). It functions in the pathway amino-acid biosynthesis; L-arginine biosynthesis; L-arginine from L-ornithine and carbamoyl phosphate: step 2/3. The polypeptide is Argininosuccinate synthase (Bradyrhizobium sp. (strain BTAi1 / ATCC BAA-1182)).